The chain runs to 123 residues: Small ribosomal subunit protein uS12 (123 aa).

Asp89 carries the post-translational modification 3-methylthioaspartic acid. A disordered region spans residues 100 to 123; the sequence is GSLDTSGVKGRNQGRSKYGTKRPK. The span at 111-123 shows a compositional bias: basic residues; the sequence is NQGRSKYGTKRPK.

The protein belongs to the universal ribosomal protein uS12 family. Part of the 30S ribosomal subunit. Contacts proteins S8 and S17. May interact with IF1 in the 30S initiation complex.

In terms of biological role, with S4 and S5 plays an important role in translational accuracy. Its function is as follows. Interacts with and stabilizes bases of the 16S rRNA that are involved in tRNA selection in the A site and with the mRNA backbone. Located at the interface of the 30S and 50S subunits, it traverses the body of the 30S subunit contacting proteins on the other side and probably holding the rRNA structure together. The combined cluster of proteins S8, S12 and S17 appears to hold together the shoulder and platform of the 30S subunit. In Pseudomonas fluorescens (strain ATCC BAA-477 / NRRL B-23932 / Pf-5), this protein is Small ribosomal subunit protein uS12.